Consider the following 388-residue polypeptide: Probable Na(+)/H(+) antiporter 3 (388 aa).

Transmembrane regions (helical) follow at residues 2–22 (ESYYYVFFIILSIIFIVPNLL), 27–47 (IPAITSIMIAGIIIGPYGLNI), 53–73 (TLKILADFGAIMLMFLAGLEV), 81–101 (EFKNSLILSLFSLLIPGVGGY), 102–122 (LIGQYLGLGFIGSLLYAVIFA), 146–166 (IILSATIIVDLFTLLLLSVVI), 175–195 (VGTFLLETVLYIGVLLLAIPS), 215–235 (VLFIIFIAIIVGEVIGIHPIV), 263–283 (AIGYGFFIPIFFLVLGMETNI), 294–314 (LLLITLISAVALKFISGFIAL), 325–345 (TIGGLLTVPKISASLVAASIG), and 354–374 (EIFVTIVALSVITATITPIVV).

This sequence belongs to the monovalent cation:proton antiporter 1 (CPA1) transporter (TC 2.A.36) family.

It is found in the cell membrane. This is probably a Na(+)/H(+) antiporter. The polypeptide is Probable Na(+)/H(+) antiporter 3 (Methanocaldococcus jannaschii (strain ATCC 43067 / DSM 2661 / JAL-1 / JCM 10045 / NBRC 100440) (Methanococcus jannaschii)).